The following is a 530-amino-acid chain: Light-independent protochlorophyllide reductase subunit B (530 aa).

Asp36 contributes to the [4Fe-4S] cluster binding site. Asp290 acts as the Proton donor in catalysis. 425–426 (GL) contacts substrate. The interval 448–483 (LGHLGGHASETKTSSKGINQSPNNHSPAGESIHWTS) is disordered. Polar residues predominate over residues 458–473 (TKTSSKGINQSPNNHS).

Belongs to the ChlB/BchB/BchZ family. Protochlorophyllide reductase is composed of three subunits; ChlL, ChlN and ChlB. Forms a heterotetramer of two ChlB and two ChlN subunits. Requires [4Fe-4S] cluster as cofactor.

It catalyses the reaction chlorophyllide a + oxidized 2[4Fe-4S]-[ferredoxin] + 2 ADP + 2 phosphate = protochlorophyllide a + reduced 2[4Fe-4S]-[ferredoxin] + 2 ATP + 2 H2O. Its pathway is porphyrin-containing compound metabolism; chlorophyll biosynthesis (light-independent). Component of the dark-operative protochlorophyllide reductase (DPOR) that uses Mg-ATP and reduced ferredoxin to reduce ring D of protochlorophyllide (Pchlide) to form chlorophyllide a (Chlide). This reaction is light-independent. The NB-protein (ChlN-ChlB) is the catalytic component of the complex. The sequence is that of Light-independent protochlorophyllide reductase subunit B from Prochlorococcus marinus (strain SARG / CCMP1375 / SS120).